Consider the following 500-residue polypeptide: Anthranilate synthase component 1 (500 aa).

Residues Ser-49 and 276 to 278 (PFM) each bind L-tryptophan. 311 to 312 (GT) contacts chorismate. A Mg(2+)-binding site is contributed by Glu-338. Chorismate is bound by residues Tyr-426, Arg-446, 460–462 (GGG), and Gly-462. Glu-475 serves as a coordination point for Mg(2+).

The protein belongs to the anthranilate synthase component I family. Heterotetramer consisting of two non-identical subunits: a beta subunit (TrpG) and a large alpha subunit (TrpE). The cofactor is Mg(2+).

It catalyses the reaction chorismate + L-glutamine = anthranilate + pyruvate + L-glutamate + H(+). Its pathway is amino-acid biosynthesis; L-tryptophan biosynthesis; L-tryptophan from chorismate: step 1/5. With respect to regulation, feedback inhibited by tryptophan. Functionally, part of a heterotetrameric complex that catalyzes the two-step biosynthesis of anthranilate, an intermediate in the biosynthesis of L-tryptophan. In the first step, the glutamine-binding beta subunit (TrpG) of anthranilate synthase (AS) provides the glutamine amidotransferase activity which generates ammonia as a substrate that, along with chorismate, is used in the second step, catalyzed by the large alpha subunit of AS (TrpE) to produce anthranilate. In the absence of TrpG, TrpE can synthesize anthranilate directly from chorismate and high concentrations of ammonia. In Cereibacter sphaeroides (strain ATCC 17023 / DSM 158 / JCM 6121 / CCUG 31486 / LMG 2827 / NBRC 12203 / NCIMB 8253 / ATH 2.4.1.) (Rhodobacter sphaeroides), this protein is Anthranilate synthase component 1 (trpE).